Reading from the N-terminus, the 523-residue chain is Mediator of RNA polymerase II transcription subunit 1.2 (523 aa).

This sequence belongs to the Mediator complex subunit 1 family. In terms of assembly, component of the Mediator complex.

Its subcellular location is the nucleus. In terms of biological role, component of the Mediator complex, a coactivator involved in the regulated transcription of nearly all RNA polymerase II-dependent genes. Mediator functions as a bridge to convey information from gene-specific regulatory proteins to the basal RNA polymerase II transcription machinery. Mediator is recruited to promoters by direct interactions with regulatory proteins and serves as a scaffold for the assembly of a functional preinitiation complex with RNA polymerase II and the general transcription factors. The polypeptide is Mediator of RNA polymerase II transcription subunit 1.2 (mdt-1.2) (Caenorhabditis briggsae).